The chain runs to 216 residues: LexA repressor (216 aa).

A DNA-binding region (H-T-H motif) is located at residues 29–49; the sequence is RAEIAQALGFRSPNAAEDHLK. Active-site for autocatalytic cleavage activity residues include Ser134 and Lys171.

The protein belongs to the peptidase S24 family. As to quaternary structure, homodimer.

The catalysed reaction is Hydrolysis of Ala-|-Gly bond in repressor LexA.. Functionally, represses a number of genes involved in the response to DNA damage (SOS response), including recA and lexA. In the presence of single-stranded DNA, RecA interacts with LexA causing an autocatalytic cleavage which disrupts the DNA-binding part of LexA, leading to derepression of the SOS regulon and eventually DNA repair. The polypeptide is LexA repressor (Bordetella bronchiseptica (strain ATCC BAA-588 / NCTC 13252 / RB50) (Alcaligenes bronchisepticus)).